Reading from the N-terminus, the 88-residue chain is Large ribosomal subunit protein eL37 (88 aa).

The disordered stretch occupies residues 1–24; it reads MTKGTTSFGKRHNKSHTQCRRCGR. A compositionally biased stretch (basic residues) spans 9–24; sequence GKRHNKSHTQCRRCGR. Residues Cys19, Cys22, Cys34, and Cys37 each contribute to the Zn(2+) site. A C4-type zinc finger spans residues 19–37; it reads CRRCGRKSYHIQKKTCSSC.

This sequence belongs to the eukaryotic ribosomal protein eL37 family. It depends on Zn(2+) as a cofactor.

In terms of biological role, binds to the 23S rRNA. The protein is Large ribosomal subunit protein eL37 (RPL37) of Schistosoma mansoni (Blood fluke).